A 157-amino-acid polypeptide reads, in one-letter code: Increased recombination centers protein 23 (157 aa).

Residues 1–6 (MIEALE) are Cytoplasmic-facing. A helical transmembrane segment spans residues 7 to 29 (IVLLLVIQSLQYICRTCIAFLLI). The Lumenal segment spans residues 30-33 (PFLG). The chain crosses the membrane as a helical span at residues 34–56 (LYAFDLFLYVYRMILYLSQMFNY). Over 57-157 (KRKLGRSKTN…EEGYYIAGSI (101 aa)) the chain is Cytoplasmic.

The protein resides in the endoplasmic reticulum membrane. In terms of biological role, is probably involved in a pathway contributing to genomic integrity. The polypeptide is Increased recombination centers protein 23 (IRC23) (Saccharomyces cerevisiae (strain ATCC 204508 / S288c) (Baker's yeast)).